Here is a 220-residue protein sequence, read N- to C-terminus: Deoxyribose-phosphate aldolase (220 aa).

Aspartate 89 serves as the catalytic Proton donor/acceptor. Lysine 151 serves as the catalytic Schiff-base intermediate with acetaldehyde. The active-site Proton donor/acceptor is the lysine 180.

It belongs to the DeoC/FbaB aldolase family. DeoC type 1 subfamily.

The protein localises to the cytoplasm. The catalysed reaction is 2-deoxy-D-ribose 5-phosphate = D-glyceraldehyde 3-phosphate + acetaldehyde. The protein operates within carbohydrate degradation; 2-deoxy-D-ribose 1-phosphate degradation; D-glyceraldehyde 3-phosphate and acetaldehyde from 2-deoxy-alpha-D-ribose 1-phosphate: step 2/2. In terms of biological role, catalyzes a reversible aldol reaction between acetaldehyde and D-glyceraldehyde 3-phosphate to generate 2-deoxy-D-ribose 5-phosphate. In Staphylococcus epidermidis (strain ATCC 12228 / FDA PCI 1200), this protein is Deoxyribose-phosphate aldolase.